Consider the following 345-residue polypeptide: tRNA-specific 2-thiouridylase MnmA (345 aa).

ATP-binding positions include 6 to 13 and L32; that span reads AMSGGVDS. The active-site Nucleophile is C100. C100 and C197 are oxidised to a cystine. G124 provides a ligand contact to ATP. Residues 146 to 148 form an interaction with tRNA region; that stretch reads RDQ. C197 serves as the catalytic Cysteine persulfide intermediate.

The protein belongs to the MnmA/TRMU family.

It is found in the cytoplasm. The catalysed reaction is S-sulfanyl-L-cysteinyl-[protein] + uridine(34) in tRNA + AH2 + ATP = 2-thiouridine(34) in tRNA + L-cysteinyl-[protein] + A + AMP + diphosphate + H(+). Its function is as follows. Catalyzes the 2-thiolation of uridine at the wobble position (U34) of tRNA, leading to the formation of s(2)U34. The protein is tRNA-specific 2-thiouridylase MnmA of Acidiphilium cryptum (strain JF-5).